The chain runs to 191 residues: Cell division protein SepF (191 aa).

Low complexity predominate over residues 151–164 (SSSPEEASPSSVST). A disordered region spans residues 151–191 (SSSPEEASPSSVSTEKTPQYSLGKNTTPEPAWGNSKLSAYS). Positions 165–178 (EKTPQYSLGKNTTP) are enriched in polar residues.

Belongs to the SepF family. As to quaternary structure, homodimer. Interacts with FtsZ.

Its subcellular location is the cytoplasm. Cell division protein that is part of the divisome complex and is recruited early to the Z-ring. Probably stimulates Z-ring formation, perhaps through the cross-linking of FtsZ protofilaments. Its function overlaps with FtsA. The chain is Cell division protein SepF from Prochlorococcus marinus (strain MIT 9301).